The following is a 196-amino-acid chain: ATP-dependent Clp protease proteolytic subunit (196 aa).

The Nucleophile role is filled by S101. H126 is a catalytic residue.

Belongs to the peptidase S14 family. In terms of assembly, component of the chloroplastic Clp protease core complex.

The protein resides in the plastid. The protein localises to the chloroplast stroma. It catalyses the reaction Hydrolysis of proteins to small peptides in the presence of ATP and magnesium. alpha-casein is the usual test substrate. In the absence of ATP, only oligopeptides shorter than five residues are hydrolyzed (such as succinyl-Leu-Tyr-|-NHMec, and Leu-Tyr-Leu-|-Tyr-Trp, in which cleavage of the -Tyr-|-Leu- and -Tyr-|-Trp bonds also occurs).. Functionally, cleaves peptides in various proteins in a process that requires ATP hydrolysis. Has a chymotrypsin-like activity. Plays a major role in the degradation of misfolded proteins. The sequence is that of ATP-dependent Clp protease proteolytic subunit from Panax ginseng (Korean ginseng).